The following is a 259-amino-acid chain: Global transcriptional regulator CodY (259 aa).

The interval methionine 1–leucine 155 is GAF domain. The H-T-H motif DNA-binding region spans alanine 203–arginine 222.

Belongs to the CodY family.

Its subcellular location is the cytoplasm. In terms of biological role, DNA-binding global transcriptional regulator which is involved in the adaptive response to starvation and acts by directly or indirectly controlling the expression of numerous genes in response to nutrient availability. During rapid exponential growth, CodY is highly active and represses genes whose products allow adaptation to nutrient depletion. In Listeria welshimeri serovar 6b (strain ATCC 35897 / DSM 20650 / CCUG 15529 / CIP 8149 / NCTC 11857 / SLCC 5334 / V8), this protein is Global transcriptional regulator CodY.